A 206-amino-acid polypeptide reads, in one-letter code: Small ribosomal subunit protein uS4 (206 aa).

Residues 96–156 enclose the S4 RNA-binding domain; it reads GRLDNVVYRM…EKSKKQARIK (61 aa).

The protein belongs to the universal ribosomal protein uS4 family. As to quaternary structure, part of the 30S ribosomal subunit. Contacts protein S5. The interaction surface between S4 and S5 is involved in control of translational fidelity.

Its function is as follows. One of the primary rRNA binding proteins, it binds directly to 16S rRNA where it nucleates assembly of the body of the 30S subunit. In terms of biological role, with S5 and S12 plays an important role in translational accuracy. The protein is Small ribosomal subunit protein uS4 of Glaesserella parasuis serovar 5 (strain SH0165) (Haemophilus parasuis).